We begin with the raw amino-acid sequence, 162 residues long: NADH-quinone oxidoreductase subunit I (162 aa).

2 4Fe-4S ferredoxin-type domains span residues 52–82 (LRRYPNGEERCIACKLCEAICPAQAITIEAG) and 93–122 (TRYDIDMVKCIYCGMCQEACPVDAIVEGPN). 8 residues coordinate [4Fe-4S] cluster: Cys-62, Cys-65, Cys-68, Cys-72, Cys-102, Cys-105, Cys-108, and Cys-112.

This sequence belongs to the complex I 23 kDa subunit family. NDH-1 is composed of 14 different subunits. Subunits NuoA, H, J, K, L, M, N constitute the membrane sector of the complex. The cofactor is [4Fe-4S] cluster.

It is found in the cell inner membrane. It catalyses the reaction a quinone + NADH + 5 H(+)(in) = a quinol + NAD(+) + 4 H(+)(out). Functionally, NDH-1 shuttles electrons from NADH, via FMN and iron-sulfur (Fe-S) centers, to quinones in the respiratory chain. The immediate electron acceptor for the enzyme in this species is believed to be ubiquinone. Couples the redox reaction to proton translocation (for every two electrons transferred, four hydrogen ions are translocated across the cytoplasmic membrane), and thus conserves the redox energy in a proton gradient. The polypeptide is NADH-quinone oxidoreductase subunit I (Methylorubrum extorquens (strain PA1) (Methylobacterium extorquens)).